Reading from the N-terminus, the 179-residue chain is Large ribosomal subunit protein uL5 (179 aa).

Belongs to the universal ribosomal protein uL5 family. As to quaternary structure, part of the 50S ribosomal subunit; part of the 5S rRNA/L5/L18/L25 subcomplex. Contacts the 5S rRNA and the P site tRNA. Forms a bridge to the 30S subunit in the 70S ribosome.

In terms of biological role, this is one of the proteins that bind and probably mediate the attachment of the 5S RNA into the large ribosomal subunit, where it forms part of the central protuberance. In the 70S ribosome it contacts protein S13 of the 30S subunit (bridge B1b), connecting the 2 subunits; this bridge is implicated in subunit movement. Contacts the P site tRNA; the 5S rRNA and some of its associated proteins might help stabilize positioning of ribosome-bound tRNAs. This Bacillus pumilus (strain SAFR-032) protein is Large ribosomal subunit protein uL5.